The primary structure comprises 259 residues: Ribonuclease PH (259 aa).

Phosphate contacts are provided by residues Arg-88 and 126–128 (GTR).

It belongs to the RNase PH family. Homohexameric ring arranged as a trimer of dimers.

The catalysed reaction is tRNA(n+1) + phosphate = tRNA(n) + a ribonucleoside 5'-diphosphate. Phosphorolytic 3'-5' exoribonuclease that plays an important role in tRNA 3'-end maturation. Removes nucleotide residues following the 3'-CCA terminus of tRNAs; can also add nucleotides to the ends of RNA molecules by using nucleoside diphosphates as substrates, but this may not be physiologically important. Probably plays a role in initiation of 16S rRNA degradation (leading to ribosome degradation) during starvation. This Mycolicibacterium paratuberculosis (strain ATCC BAA-968 / K-10) (Mycobacterium paratuberculosis) protein is Ribonuclease PH.